A 640-amino-acid polypeptide reads, in one-letter code: Threonine--tRNA ligase (640 aa).

A catalytic region spans residues 224–525 (DHRKLGKELD…LTEHYAGAFP (302 aa)). Zn(2+)-binding residues include Cys-323, His-374, and His-502.

Belongs to the class-II aminoacyl-tRNA synthetase family. Homodimer. The cofactor is Zn(2+).

It localises to the cytoplasm. The enzyme catalyses tRNA(Thr) + L-threonine + ATP = L-threonyl-tRNA(Thr) + AMP + diphosphate + H(+). Catalyzes the attachment of threonine to tRNA(Thr) in a two-step reaction: L-threonine is first activated by ATP to form Thr-AMP and then transferred to the acceptor end of tRNA(Thr). Also edits incorrectly charged L-seryl-tRNA(Thr). This chain is Threonine--tRNA ligase, found in Tropheryma whipplei (strain TW08/27) (Whipple's bacillus).